A 148-amino-acid polypeptide reads, in one-letter code: Nucleoside diphosphate kinase (148 aa).

ATP-binding residues include Lys9, Phe57, Arg85, Thr91, Arg102, and Asn112. The active-site Pros-phosphohistidine intermediate is His115.

Belongs to the NDK family. Mg(2+) serves as cofactor.

The catalysed reaction is a 2'-deoxyribonucleoside 5'-diphosphate + ATP = a 2'-deoxyribonucleoside 5'-triphosphate + ADP. The enzyme catalyses a ribonucleoside 5'-diphosphate + ATP = a ribonucleoside 5'-triphosphate + ADP. Major role in the synthesis of nucleoside triphosphates other than ATP. The ATP gamma phosphate is transferred to the NDP beta phosphate via a ping-pong mechanism, using a phosphorylated active-site intermediate. The protein is Nucleoside diphosphate kinase of Helianthus annuus (Common sunflower).